Consider the following 549-residue polypeptide: Probable protein kinase UbiB (549 aa).

In terms of domain architecture, Protein kinase spans 123–501 (DFEDTPLASA…QQKAHKSNYL (379 aa)). ATP is bound by residues 129 to 137 (LASASISQV) and K152. Residue D287 is the Proton acceptor of the active site. The next 2 helical transmembrane spans lie at 498-518 (SNYLLITSAILVICGTILLNQ) and 520-540 (ATLWASYGSIGTGLILWVLGW).

The protein belongs to the ABC1 family. UbiB subfamily.

The protein localises to the cell inner membrane. It participates in cofactor biosynthesis; ubiquinone biosynthesis [regulation]. Its function is as follows. Is probably a protein kinase regulator of UbiI activity which is involved in aerobic coenzyme Q (ubiquinone) biosynthesis. This chain is Probable protein kinase UbiB, found in Shewanella piezotolerans (strain WP3 / JCM 13877).